The following is a 556-amino-acid chain: 2-succinyl-5-enolpyruvyl-6-hydroxy-3-cyclohexene-1-carboxylate synthase (556 aa).

It belongs to the TPP enzyme family. MenD subfamily. Homodimer. Mg(2+) is required as a cofactor. The cofactor is Mn(2+). Requires thiamine diphosphate as cofactor.

The catalysed reaction is isochorismate + 2-oxoglutarate + H(+) = 5-enolpyruvoyl-6-hydroxy-2-succinyl-cyclohex-3-ene-1-carboxylate + CO2. It functions in the pathway quinol/quinone metabolism; 1,4-dihydroxy-2-naphthoate biosynthesis; 1,4-dihydroxy-2-naphthoate from chorismate: step 2/7. It participates in quinol/quinone metabolism; menaquinone biosynthesis. Functionally, catalyzes the thiamine diphosphate-dependent decarboxylation of 2-oxoglutarate and the subsequent addition of the resulting succinic semialdehyde-thiamine pyrophosphate anion to isochorismate to yield 2-succinyl-5-enolpyruvyl-6-hydroxy-3-cyclohexene-1-carboxylate (SEPHCHC). The polypeptide is 2-succinyl-5-enolpyruvyl-6-hydroxy-3-cyclohexene-1-carboxylate synthase (Salmonella paratyphi C (strain RKS4594)).